Consider the following 258-residue polypeptide: Undecaprenyl-diphosphatase (258 aa).

8 helical membrane-spanning segments follow: residues 1–21, 42–62, 69–89, 96–116, 135–155, 173–193, 211–231, and 237–257; these read MDFL…FLPV, LKCF…FMFF, FNLW…GFLA, FFEP…FIVV, VSFK…IPGT, EVAA…ATAY, IFLV…KLFL, and FSYI…LIYI.

Belongs to the UppP family.

The protein localises to the cell inner membrane. It catalyses the reaction di-trans,octa-cis-undecaprenyl diphosphate + H2O = di-trans,octa-cis-undecaprenyl phosphate + phosphate + H(+). Catalyzes the dephosphorylation of undecaprenyl diphosphate (UPP). Confers resistance to bacitracin. This chain is Undecaprenyl-diphosphatase, found in Campylobacter fetus subsp. fetus (strain 82-40).